Reading from the N-terminus, the 169-residue chain is Lipoprotein signal peptidase (169 aa).

4 helical membrane-spanning segments follow: residues 15 to 35 (WLWLAIVIFLADIGIKYVVMN), 47 to 67 (ILPFFNLLYVHNYGAAFSFLS), 75 to 95 (WLFTGIAFVVTGLLTYWMSKL), and 107 to 127 (AMIIGGAVGNVFDRVIHGFVV). Active-site residues include aspartate 128 and aspartate 146. The chain crosses the membrane as a helical span at residues 141–161 (AFNLADMAICLGAAMIILDGF).

Belongs to the peptidase A8 family.

It localises to the cell inner membrane. The catalysed reaction is Release of signal peptides from bacterial membrane prolipoproteins. Hydrolyzes -Xaa-Yaa-Zaa-|-(S,diacylglyceryl)Cys-, in which Xaa is hydrophobic (preferably Leu), and Yaa (Ala or Ser) and Zaa (Gly or Ala) have small, neutral side chains.. Its pathway is protein modification; lipoprotein biosynthesis (signal peptide cleavage). This protein specifically catalyzes the removal of signal peptides from prolipoproteins. The protein is Lipoprotein signal peptidase of Vibrio parahaemolyticus serotype O3:K6 (strain RIMD 2210633).